The following is a 208-amino-acid chain: Virion protein US10 homolog (208 aa).

Residues 17 to 61 are disordered; that stretch reads ARGAKLSPGQHPRPSHAVRGRTAPGTRSSRRRTCEDGTSGPRDPR. A zinc finger lies at 167–179; that stretch reads CAFWCCLAHAATC.

The protein belongs to the herpesviridae US10 family. In terms of processing, phosphorylated.

It localises to the virion tegument. Its subcellular location is the host nucleus matrix. This is Virion protein US10 homolog from Homo sapiens (Human).